The following is a 175-amino-acid chain: Hypoxanthine-guanine phosphoribosyltransferase (175 aa).

The diphosphate site is built by K40 and G41. Mg(2+)-binding residues include E96 and D97. The active-site Proton acceptor is D100. GMP-binding positions include K128, 149–150, and D156; that span reads FL. Position 162 (R162) interacts with diphosphate.

It belongs to the purine/pyrimidine phosphoribosyltransferase family. Requires Mg(2+) as cofactor.

Its subcellular location is the cytoplasm. It carries out the reaction IMP + diphosphate = hypoxanthine + 5-phospho-alpha-D-ribose 1-diphosphate. It catalyses the reaction GMP + diphosphate = guanine + 5-phospho-alpha-D-ribose 1-diphosphate. It participates in purine metabolism; IMP biosynthesis via salvage pathway; IMP from hypoxanthine: step 1/1. It functions in the pathway purine metabolism; GMP biosynthesis via salvage pathway; GMP from guanine: step 1/1. Its function is as follows. Purine salvage pathway enzyme that catalyzes the transfer of the ribosyl-5-phosphate group from 5-phospho-alpha-D-ribose 1-diphosphate (PRPP) to the N9 position of the 6-oxopurines hypoxanthine and guanine to form the corresponding ribonucleotides IMP (inosine 5'-monophosphate) and GMP (guanosine 5'-monophosphate), with the release of PPi. The polypeptide is Hypoxanthine-guanine phosphoribosyltransferase (hpt) (Mycoplasma pneumoniae (strain ATCC 29342 / M129 / Subtype 1) (Mycoplasmoides pneumoniae)).